The chain runs to 305 residues: Mas-related G-protein coupled receptor member A8 (305 aa).

Residues 1–17 (MDKTILGSIDIETLIRH) lie on the Extracellular side of the membrane. Residues 18–38 (LMIIIFGLVGLTGNAIVFWLL) traverse the membrane as a helical segment. The Cytoplasmic segment spans residues 39 to 46 (GFHLHRNA). A helical transmembrane segment spans residues 47–67 (FLVYILNLALADFFYLLCHII). The Extracellular portion of the chain corresponds to 68 to 85 (NSIMFLLKVPSPNIILDH). A helical membrane pass occupies residues 86 to 106 (CFYTIMIVLYITGLSMLSAIS). Residues 107–129 (TERCLSVLCPIWYRCHRPEHTST) lie on the Cytoplasmic side of the membrane. A helical membrane pass occupies residues 130–150 (AMCAVIWVMSLLISILNGYFC). Asparagine 151 and asparagine 159 each carry an N-linked (GlcNAc...) asparagine glycan. At 151–172 (NFSSPKYVNNSVCQASDIFIRT) the chain is on the extracellular side. Residues 173–193 (YPIFLFVLLCLSTLALLARLF) form a helical membrane-spanning segment. At 194–207 (SGAGKRKFTRLFVT) the chain is on the cytoplasmic side. Residues 208-228 (IMLAILVFLLCGLPLGFFWFL) form a helical membrane-spanning segment. Over 229–243 (SPWIEDRFIVLDYRL) the chain is Extracellular. The helical transmembrane segment at 244–264 (FFASVVLTVVNSCANPIIYFF) threads the bilayer. Residues 265–305 (VGSFRHRLKQQTLKMFLQRALQDTPETPENMVEMSRSKAEP) lie on the Cytoplasmic side of the membrane.

It belongs to the G-protein coupled receptor 1 family. Mas subfamily. Expressed in a subset of sensory neurons that includes nociceptors. Expressed in the subclass of non-peptidergic sensory neurons that are IB4(+) and VR1(-).

It localises to the cell membrane. Orphan receptor. May be a receptor for RFamide-family neuropeptides such as NPFF and NPAF, which are analgesic in vivo. May regulate nociceptor function and/or development, including the sensation or modulation of pain. This chain is Mas-related G-protein coupled receptor member A8 (Mrgpra8), found in Mus musculus (Mouse).